The sequence spans 1025 residues: MDRKKTLINSSVSNNNSTIKGLQLFIADLRSAQQAQEQEKRIQSEIVKIKQHFDAAKKKQGNHDRLGGYQRKKYVAKLAYIYITSNTTKLNEILFGLEQTVELLKSSIFSEKFIGYMTLELLYERSEVVAKVNDEVNYQLMKDLSSSDDNFVMLALNFVGVVGELTNRLAYNDDITTGVFKILRSPTSSIYLKKKSALSFLALLKSNHSILTEDLQRKQLWIQRILSLLDDTENYRLTLATIPLIEFIAKYIDPSYCTRLLPQLTEILYNCVVVGTSRSSDNQFPLEYTFANMPNPWLITKVVSLLSILIASPTERDSGSLLQTNNIDNELLNKLRKCVSVAIELGTRQAQDPMERIVQNTVLFSLINFASKLDPSDEAISNSVTALCSLLTSKEINIRYLTLDSLVKLCSSSGKPAIDAVRYKNLDMIFHLLNTERDSSIVRKVVDLLYTFTDVENVKIIVDGLLQYILSPKNLAEPQIKSDIAVKIAILTEKYATDINWFVIISLQLLSLTSNTTINDDEIWQRLCQIVVNNPSLHRITCERLVDYLCKKQASEAIIKAAAFLLGEYSSLITDRISSANLFTLFAEKYFSAPNVAKAMILTTMIKLYKTSPEIGSNVIKFFQLELNSLDIELQTRSFEYLNIIQLAKVNGNTDILQILFEPMPPFNSKSNPLLKRLGSLPASAGSTTLINTPSEASSSTPDLLSKRANSSRSIMVPMPPPSRRNTIDDVNSKISSSEDFSGKDSYYSRQILAPNWREGFTRMISHKQGVLFTSSLMKVFYRITTPDAQQPYVFHISLAFINLTEWEITGLSTQIIPSKTQGNPEYLIMNINTPSTATIGPHKRAEQSYEVSIRKPFDVEDSPILAIHFKCGGSTNTINLKTAIGMTTTLISSDVNPSMHLNLAQFISRWKTLSDALGKEGEYQKSGIKLNKDFRKVETISLEDGLLLLTQTVKRLGFDIVDQTSVRSTLFVSGIIHTKSEGNFGCLMKIQYQVNGTVNVTCKTTTAGPLAKYIVECIKNVLTK.

Residues 713-737 (RSIMVPMPPPSRRNTIDDVNSKISS) form a disordered region. Thr727 is modified (phosphothreonine). Position 733 is a phosphoserine (Ser733).

It belongs to the adaptor complexes large subunit family. As to quaternary structure, adaptor protein complex 2 (AP-2) is a heterotetramer composed of two large adaptins (alpha-type subunit APL3 and beta-type subunit APL1), a medium chain (mu-type subunit APM4) and a small adaptin (sigma-type subunit APS2).

It is found in the cell membrane. The protein resides in the membrane. Its subcellular location is the coated pit. Adaptins are components of the adaptor complexes which link clathrin to receptors in coated vesicles. Clathrin-associated protein complexes are believed to interact with the cytoplasmic tails of membrane proteins, leading to their selection and concentration. Alpha adaptin is a subunit of the plasma membrane adaptor. Facilitates interaction between APL1 and APS2. In Saccharomyces cerevisiae (strain ATCC 204508 / S288c) (Baker's yeast), this protein is AP-2 complex subunit alpha (APL3).